A 287-amino-acid chain; its full sequence is HTH-type transcriptional regulator MurR (287 aa).

Positions 1–77 constitute an HTH rpiR-type domain; the sequence is MLYLAKMRNA…MALIEEYSVN (77 aa). Positions 37–56 form a DNA-binding region, H-T-H motif; the sequence is SRNLAKQLEVSQSSIVKFAQ. One can recognise an SIS domain in the interval 128-268; that stretch reads VINLISKARL…FVGMVQLNDV (141 aa).

As to quaternary structure, homotetramer.

It functions in the pathway amino-sugar metabolism; N-acetylmuramate degradation [regulation]. In terms of biological role, represses the expression of the murPQ operon involved in the uptake and degradation of N-acetylmuramic acid (MurNAc). Binds to two adjacent inverted repeats within the operator region. MurNAc 6-phosphate, the substrate of MurQ, is the specific inducer that weakens binding of MurR to the operator. The polypeptide is HTH-type transcriptional regulator MurR (Citrobacter koseri (strain ATCC BAA-895 / CDC 4225-83 / SGSC4696)).